The primary structure comprises 497 residues: Acetyltransferase adrJ (497 aa).

Active-site proton acceptor residues include His174 and Asp422. Residues 430-451 (SSAQSSSQNTQKKGKPSYVNGV) form a disordered region.

This sequence belongs to the plant acyltransferase family. Monomer.

The protein operates within secondary metabolite biosynthesis; terpenoid biosynthesis. Its function is as follows. Acetyltransferase; part of the gene cluster that mediates the biosynthesis of andrastins, meroterpenoid compounds that exhibit inhibitory activity against ras farnesyltransferase, suggesting that they could be promising leads for antitumor agents. The first step of the pathway is the synthesis of 3,5-dimethylorsellinic acid (DMOA) by the polyketide synthase adrD via condensation of one acetyl-CoA starter unit with 3 malonyl-CoA units and 2 methylations. DMAO is then converted to farnesyl-DMAO by the prenyltransferase adrG. The methyltransferase adrK catalyzes the methylation of the carboxyl group of farnesyl-DMAO to farnesyl-DMAO methyl ester which is further converted to epoxyfarnesyl-DMAO methyl ester by the FAD-dependent monooxygenase adrH. The terpene cyclase adrI then catalyzes the carbon skeletal rearrangement to generate the andrastin E, the first compound in the pathway having the andrastin scaffold, with the tetracyclic ring system. The post-cyclization tailoring enzymes adrF, adrE, adrJ, and adrA, are involved in the conversion of andrastin E into andrastin A. The short chain dehydrogenase adrF is responsible for the oxidation of the C-3 a hydroxyl group of andrastin E to yield the corresponding ketone, andrastin D. The ketoreductase adrE stereoselectively reduces the carbonyl moiety to reverse the stereochemistry of the C-3 position to yield andrastin F. The acetyltransferase adrJ is the acetyltransferase that attaches the acetyl group to the C-3 hydroxyl group of andrastin F to yield andrastin C. Finally, the cytochrome P450 monooxygenase adrA catalyzes two sequential oxidation reactions of the C-23 methyl group, to generate the corresponding alcohol andrastin B, and aldehyde andrastin A. The polypeptide is Acetyltransferase adrJ (Penicillium rubens (strain ATCC 28089 / DSM 1075 / NRRL 1951 / Wisconsin 54-1255) (Penicillium chrysogenum)).